The primary structure comprises 288 residues: Thymidylate synthase (288 aa).

Residue Arg-21 coordinates dUMP. Residue Asn-51 participates in (6R)-5,10-methylene-5,6,7,8-tetrahydrofolate binding. A dUMP-binding site is contributed by 150–151; sequence RR. Cys-170 (nucleophile) is an active-site residue. DUMP is bound by residues 190–193, Asn-201, and 231–233; these read RSGD and HIY. Asp-193 contacts (6R)-5,10-methylene-5,6,7,8-tetrahydrofolate. Ala-287 serves as a coordination point for (6R)-5,10-methylene-5,6,7,8-tetrahydrofolate.

Belongs to the thymidylate synthase family. Bacterial-type ThyA subfamily. In terms of assembly, homodimer.

The protein resides in the cytoplasm. The enzyme catalyses dUMP + (6R)-5,10-methylene-5,6,7,8-tetrahydrofolate = 7,8-dihydrofolate + dTMP. The protein operates within pyrimidine metabolism; dTTP biosynthesis. Functionally, catalyzes the reductive methylation of 2'-deoxyuridine-5'-monophosphate (dUMP) to 2'-deoxythymidine-5'-monophosphate (dTMP) while utilizing 5,10-methylenetetrahydrofolate (mTHF) as the methyl donor and reductant in the reaction, yielding dihydrofolate (DHF) as a by-product. This enzymatic reaction provides an intracellular de novo source of dTMP, an essential precursor for DNA biosynthesis. This Phytoplasma mali (strain AT) protein is Thymidylate synthase.